Reading from the N-terminus, the 330-residue chain is Adenylate isopentenyltransferase 8, chloroplastic (330 aa).

The N-terminal 35 residues, 1–35 (MQNLTSTFVSPSMIPITSPRLRLPPPRSVVPMTTV), are a transit peptide targeting the chloroplast. 50-57 (GATGSGKS) provides a ligand contact to ATP.

This sequence belongs to the IPP transferase family. Expressed in roots and in immature seeds with highest expression in the chalazal endosperm.

It is found in the plastid. It localises to the chloroplast. It carries out the reaction dimethylallyl diphosphate + ADP = N(6)-(dimethylallyl)adenosine 5'-diphosphate + diphosphate. It catalyses the reaction dimethylallyl diphosphate + ATP = N(6)-(dimethylallyl)adenosine 5'-triphosphate + diphosphate. In terms of biological role, involved in cytokinin biosynthesis. Catalyzes the transfer of an isopentenyl group from dimethylallyl diphosphate (DMAPP) to ATP and ADP. The chain is Adenylate isopentenyltransferase 8, chloroplastic (IPT8) from Arabidopsis thaliana (Mouse-ear cress).